The following is a 125-amino-acid chain: Translation initiation factor 5A (125 aa).

Hypusine is present on Lys35.

The protein belongs to the eIF-5A family.

It is found in the cytoplasm. In terms of biological role, functions by promoting the formation of the first peptide bond. In Methanoculleus marisnigri (strain ATCC 35101 / DSM 1498 / JR1), this protein is Translation initiation factor 5A (eIF5A).